The following is a 147-amino-acid chain: Large ribosomal subunit protein uL22c (147 aa).

It belongs to the universal ribosomal protein uL22 family. As to quaternary structure, part of the 50S ribosomal subunit.

Its subcellular location is the plastid. Functionally, this protein binds specifically to 23S rRNA. Its function is as follows. The globular domain of the protein is located near the polypeptide exit tunnel on the outside of the subunit, while an extended beta-hairpin is found that lines the wall of the exit tunnel in the center of the 70S ribosome. The protein is Large ribosomal subunit protein uL22c (rpl22) of Cuscuta obtusiflora (Peruvian dodder).